A 706-amino-acid chain; its full sequence is MSTAVAEFKPSEKLLKTRNIGISAHIDSGKTTLTERILFYTNRIHAIHEVRGKDGVGAKMDSMDLERERGITIQSAATYCQWKNHTINIIDTPGHVDFTVEVERSLRVLDSAILVLCGVAGVQSQSITVDRQMRRYNVPRVAFINKLDRTGANPFRVIEQLKEKLKHNAVPVQIPIGLENDLKGIVDLVTMKAYYFEGKDGMDIQEKEIPDDLKELAQKKHEELLDAASMFSDELTEALLEGTPTEEMIKKAIRTGTIELKMTPVFMGSAFKNKGVQKLLDGVLDYLASPVDVKNKALDQNNNEEMIVLESNFEKPLVCLAFKLEDGRYGQLTYVRVYQGKLAKGMTIYNMSNNKKHNVGRLCRMHSDEMEDIDSAEAGDIIALFGIDCASGDTFTDGKLKVSMESMFVPAPVISLTIEAKESKHLNNLAKALNRFTKEDPTFQTHVDQESGQTIIKGMGELHLEVYIERMKREYGVELITGAPQVAYRETITSKADFDYTHKKQTGGQGQFGRVAGYMEPIPLEETLDYDFVNKVVGGAIPREYIQSVDKGFKSCLERGSLIGFPIIGVRCVINDGAYHDVDSSDMAFQIAGRYAFRQGFNKANPQILEPIMKVEVDGPSEFQGAILGSLNQRRGMILNTTEEDAYCKTEAEVPLADMFGYSTVLRSSTQGKAEFSMEFSRYAPVPRNVAEELMKKYKVNNKDED.

Residues 15-291 (LKTRNIGISA…GVLDYLASPV (277 aa)) form the tr-type G domain. Residues 24-31 (AHIDSGKT), 91-95 (DTPGH), and 145-148 (NKLD) each bind GTP.

It belongs to the TRAFAC class translation factor GTPase superfamily. Classic translation factor GTPase family. EF-G/EF-2 subfamily.

It is found in the cytoplasm. In terms of biological role, catalyzes the GTP-dependent ribosomal translocation step during translation elongation. During this step, the ribosome changes from the pre-translocational (PRE) to the post-translocational (POST) state as the newly formed A-site-bound peptidyl-tRNA and P-site-bound deacylated tRNA move to the P and E sites, respectively. Catalyzes the coordinated movement of the two tRNA molecules, the mRNA and conformational changes in the ribosome. In Leptospira interrogans serogroup Icterohaemorrhagiae serovar copenhageni (strain Fiocruz L1-130), this protein is Elongation factor G.